A 356-amino-acid chain; its full sequence is MSEVDVPELLFERVWLQVDRDRDGFIYAKQMPSFITQCEQVIKDTVNTNKTDFHMTRFKNRLKLPLLPKLHMDLIDAFAKETPYYKIYKESFSDMLNKLTGNNFSTVINKIFEDCDGFPASFISALEVKADVKSSPRSKADSLGSPIKVDLLRNLKPQEEPETPRRINRKYKSLELQLESMKRELEDKEKTIMNNERNLTELRSTISKLKEKYDLLSEEYEQRHIHGGNNGTAIKHDVVIGELKSRLQEQNRLIRILQEQIQFDPQLKRETRVHDNKSKNNTFNGAIAYVIPFLLFIFVIRSLITKEDIGDATMALPWWERNNLASRLAWYFRDVFSNDSAKFLESDAYDKVFGIH.

Residues 165 to 264 (RRINRKYKSL…RILQEQIQFD (100 aa)) are a coiled coil. Residues 285–305 (GAIAYVIPFLLFIFVIRSLIT) traverse the membrane as a helical segment.

Belongs to the MPS2 family.

It localises to the nucleus membrane. It is found in the cytoplasm. The protein resides in the cytoskeleton. The protein localises to the microtubule organizing center. Its subcellular location is the spindle pole body. Component of the spindle pole body (SPB) required for insertion of the nascent SPB into the nuclear envelope and for the proper execution of spindle pole body (SPB) duplication. The protein is Monopolar spindle protein 2 (MPS2) of Candida glabrata (strain ATCC 2001 / BCRC 20586 / JCM 3761 / NBRC 0622 / NRRL Y-65 / CBS 138) (Yeast).